The chain runs to 161 residues: N5-carboxyaminoimidazole ribonucleotide mutase (161 aa).

3 residues coordinate substrate: Ser-9, Asp-12, and Arg-39.

Belongs to the AIR carboxylase family. Class I subfamily.

The enzyme catalyses 5-carboxyamino-1-(5-phospho-D-ribosyl)imidazole + H(+) = 5-amino-1-(5-phospho-D-ribosyl)imidazole-4-carboxylate. The protein operates within purine metabolism; IMP biosynthesis via de novo pathway; 5-amino-1-(5-phospho-D-ribosyl)imidazole-4-carboxylate from 5-amino-1-(5-phospho-D-ribosyl)imidazole (N5-CAIR route): step 2/2. In terms of biological role, catalyzes the conversion of N5-carboxyaminoimidazole ribonucleotide (N5-CAIR) to 4-carboxy-5-aminoimidazole ribonucleotide (CAIR). The sequence is that of N5-carboxyaminoimidazole ribonucleotide mutase from Vibrio cholerae serotype O1 (strain ATCC 39315 / El Tor Inaba N16961).